We begin with the raw amino-acid sequence, 252 residues long: Triosephosphate isomerase (252 aa).

10–12 (NWK) provides a ligand contact to substrate. The active-site Electrophile is the H96. E168 (proton acceptor) is an active-site residue. Substrate is bound by residues G174, S214, and 235 to 236 (GG).

The protein belongs to the triosephosphate isomerase family. In terms of assembly, homodimer.

It is found in the cytoplasm. It carries out the reaction D-glyceraldehyde 3-phosphate = dihydroxyacetone phosphate. It functions in the pathway carbohydrate biosynthesis; gluconeogenesis. Its pathway is carbohydrate degradation; glycolysis; D-glyceraldehyde 3-phosphate from glycerone phosphate: step 1/1. Its function is as follows. Involved in the gluconeogenesis. Catalyzes stereospecifically the conversion of dihydroxyacetone phosphate (DHAP) to D-glyceraldehyde-3-phosphate (G3P). This Streptococcus pneumoniae serotype 2 (strain D39 / NCTC 7466) protein is Triosephosphate isomerase.